Consider the following 487-residue polypeptide: Probable nuclear hormone receptor HR3 (487 aa).

A DNA-binding region (nuclear receptor) is located at residues 48–123 (IIPCKVCGDK…LGMSRDAVKF (76 aa)). 2 consecutive NR C4-type zinc fingers follow at residues 51–71 (CKVC…CEGC) and 87–111 (CPRN…LQKC). Residues 145 to 176 (MRAQSDAAPDSSVYDTQTPSSSDQLHHNNYNS) form a disordered region. Polar residues predominate over residues 157-167 (VYDTQTPSSSD). The NR LBD domain maps to 237-480 (INDVLIKTLA…PALYKELFSI (244 aa)).

This sequence belongs to the nuclear hormone receptor family. NR1 subfamily.

Its subcellular location is the nucleus. Its function is as follows. Putative receptor whose ligand is not yet known. The chain is Probable nuclear hormone receptor HR3 from Drosophila melanogaster (Fruit fly).